A 201-amino-acid polypeptide reads, in one-letter code: MLQHLRPTLVLGVALTLLTGLAYPLAMTGLAGILFPVEAAGSLVERDGKVVGSRLIGQSFTGDRFFHGRPSATTAPDPTDASKTMPAPYNAANSGGSNLGPTSAALADRVKADVERLRAENPGAPVPVDLVTTSGSGLDPDISPEAALFQVPRIAKARHLPEERLRDLVAAQVQGRTLGLIGEPRVNVLALNLALDELAGK.

Residues 17 to 37 traverse the membrane as a helical segment; that stretch reads LLTGLAYPLAMTGLAGILFPV.

The protein belongs to the KdpC family. The system is composed of three essential subunits: KdpA, KdpB and KdpC.

Its subcellular location is the cell inner membrane. In terms of biological role, part of the high-affinity ATP-driven potassium transport (or Kdp) system, which catalyzes the hydrolysis of ATP coupled with the electrogenic transport of potassium into the cytoplasm. This subunit acts as a catalytic chaperone that increases the ATP-binding affinity of the ATP-hydrolyzing subunit KdpB by the formation of a transient KdpB/KdpC/ATP ternary complex. This chain is Potassium-transporting ATPase KdpC subunit, found in Methylobacterium nodulans (strain LMG 21967 / CNCM I-2342 / ORS 2060).